Reading from the N-terminus, the 308-residue chain is Aspartate carbamoyltransferase catalytic subunit (308 aa).

Carbamoyl phosphate-binding residues include Arg59 and Thr60. Lys87 contacts L-aspartate. Carbamoyl phosphate-binding residues include Arg109, His137, and Gln140. L-aspartate-binding residues include Arg173 and Arg224. 2 residues coordinate carbamoyl phosphate: Gly267 and Pro268.

This sequence belongs to the aspartate/ornithine carbamoyltransferase superfamily. ATCase family. In terms of assembly, heterododecamer (2C3:3R2) of six catalytic PyrB chains organized as two trimers (C3), and six regulatory PyrI chains organized as three dimers (R2).

It catalyses the reaction carbamoyl phosphate + L-aspartate = N-carbamoyl-L-aspartate + phosphate + H(+). The protein operates within pyrimidine metabolism; UMP biosynthesis via de novo pathway; (S)-dihydroorotate from bicarbonate: step 2/3. In terms of biological role, catalyzes the condensation of carbamoyl phosphate and aspartate to form carbamoyl aspartate and inorganic phosphate, the committed step in the de novo pyrimidine nucleotide biosynthesis pathway. In Helicobacter acinonychis (strain Sheeba), this protein is Aspartate carbamoyltransferase catalytic subunit.